The sequence spans 587 residues: Pescadillo homolog (587 aa).

Residues 267-306 (LKKKEEKNDEEGKNLSKKELNKAIKADQEQQENDEQDNNN) are a coiled coil. Positions 290–311 (IKADQEQQENDEQDNNNGESVE) are disordered. The segment covering 295 to 311 (EQQENDEQDNNNGESVE) has biased composition (acidic residues). Residues 335 to 434 (STAELFSKFI…ELINVNEYAA (100 aa)) enclose the BRCT domain. Residues 437–587 (TLPPHLSPWG…KKKEQLKKLN (151 aa)) form a disordered region. Residues 459–494 (KEDGEAEEDTDEEEEEVEIEDGDEDQEDEEEEEDED) show a composition bias toward acidic residues. Positions 470 to 587 (EEEEEVEIED…KKKEQLKKLN (118 aa)) form a coiled coil. 3 stretches are compositionally biased toward basic and acidic residues: residues 529-541 (SNKEADEEKELKK), 559-569 (IEKKENREKQL), and 578-587 (KKKEQLKKLN).

The protein belongs to the pescadillo family. As to quaternary structure, component of the NOP7 complex, composed of ERB1, NOP7 and YTM1. The complex is held together by ERB1, which interacts with NOP7 via its N-terminal domain and with YTM1 via a high-affinity interaction between the seven-bladed beta-propeller domains of the 2 proteins. The NOP7 complex associates with the 66S pre-ribosome.

The protein localises to the nucleus. The protein resides in the nucleolus. It is found in the nucleoplasm. In terms of biological role, component of the NOP7 complex, which is required for maturation of the 25S and 5.8S ribosomal RNAs and formation of the 60S ribosome. Required for the transition from hyphal to yeast growth. This Candida albicans (strain SC5314 / ATCC MYA-2876) (Yeast) protein is Pescadillo homolog.